The following is an 839-amino-acid chain: A disintegrin and metalloproteinase with thrombospondin motifs 4 (839 aa).

Positions 1–51 are cleaved as a signal peptide; it reads MSHMDSHPGRGLADGWLWGIQPRLLLPTVPVSGSRLVWLLLLASLLPSAWP. A propeptide spanning residues 52-212 is cleaved from the precursor; sequence ASPLPREEEI…PSPSPRRAKR (161 aa). A glycan (N-linked (GlcNAc...) asparagine) is linked at Asn68. The disordered stretch occupies residues 166-209; it reads EGGAPNSAGGPGAHILRRKSPVSGQGPMCNVKAPPGKPSPSPRR. The short motif at 192-199 is the Cysteine switch element; sequence PMCNVKAP. Cys194 lines the Zn(2+) pocket. The region spanning 218–428 is the Peptidase M12B domain; the sequence is RFVETLVVAD…GFGHCLLDKP (211 aa). Cystine bridges form between Cys293-Cys345, Cys322-Cys327, Cys339-Cys423, Cys377-Cys407, Cys449-Cys472, Cys460-Cys482, Cys467-Cys501, Cys495-Cys506, Cys532-Cys569, Cys536-Cys574, and Cys547-Cys559. Residue His361 coordinates Zn(2+). Glu362 is a catalytic residue. 2 residues coordinate Zn(2+): His365 and His371. The Disintegrin domain occupies 437-519; it reads TFPGKDYDAD…DQLQAFNVPQ (83 aa). Residues 520-575 enclose the TSP type-1 domain; it reads AGGWGPWGSWGDCSRSCGGGVQFSSRDCTRPVPRNGGKYCEGRRTRFRSCNTQDCP. The tract at residues 686 to 839 is spacer; that stretch reads SKQSGSFKKF…LRRRSWAGRK (154 aa).

As to quaternary structure, interacts with SRPX2. Zn(2+) is required as a cofactor. The precursor is cleaved by a furin endopeptidase. Post-translationally, glycosylated. Can be O-fucosylated by POFUT2 on a serine or a threonine residue found within the consensus sequence C1-X(2)-(S/T)-C2-G of the TSP type-1 repeat domains where C1 and C2 are the first and second cysteine residue of the repeat, respectively. Fucosylated repeats can then be further glycosylated by the addition of a beta-1,3-glucose residue by the glucosyltransferase, B3GALTL. Fucosylation mediates the efficient secretion of ADAMTS family members. Can also be C-glycosylated with one or two mannose molecules on tryptophan residues within the consensus sequence W-X-X-W of the TPRs, and N-glycosylated. These other glycosylations can also facilitate secretion.

Its subcellular location is the secreted. It localises to the extracellular space. The protein resides in the extracellular matrix. The enzyme catalyses Glutamyl endopeptidase. Bonds cleaved include 370-Thr-Glu-Gly-Glu-|-Ala-Arg-Gly-Ser-377 in the interglobular domain of mammalian aggrecan.. Cleaves aggrecan, a cartilage proteoglycan, at the '392-Glu-|-Ala-393' site and may be involved in its turnover. Also cleaves COMP. May play an important role in the destruction of aggrecan in arthritic diseases. The chain is A disintegrin and metalloproteinase with thrombospondin motifs 4 (ADAMTS4) from Bos taurus (Bovine).